Consider the following 227-residue polypeptide: Charged multivesicular body protein 4b (227 aa).

Disordered regions lie at residues 1–26 (MSGI…SPQE) and 186–227 (SGPE…AGNM). Residues 9-20 (FGAGAGGKGAGK) show a composition bias toward gly residues. The stretch at 25–185 (QEAIQRLRDT…EELDKNLLEI (161 aa)) forms a coiled coil.

Belongs to the SNF7 family. As to quaternary structure, probable core component of the endosomal sorting required for transport complex III (ESCRT-III). ESCRT-III components are thought to multimerize to form a flat lattice on the perimeter membrane of the endosome.

The protein resides in the cytoplasm. Its subcellular location is the cytosol. It localises to the late endosome membrane. It is found in the midbody. Its function is as follows. Probable core component of the endosomal sorting required for transport complex III (ESCRT-III) which is involved in multivesicular bodies (MVBs) formation and sorting of endosomal cargo proteins into MVBs. MVBs contain intraluminal vesicles (ILVs) that are generated by invagination and scission from the limiting membrane of the endosome and mostly are delivered to lysosomes enabling degradation of membrane proteins, such as stimulated growth factor receptors, lysosomal enzymes and lipids. This Gallus gallus (Chicken) protein is Charged multivesicular body protein 4b (CHMP4B).